Here is a 3011-residue protein sequence, read N- to C-terminus: MSTIPKPQRKTKRNTNRRPQDVKFPGGGQIVGGVYLLPRRGPRLGVRATRKTSERSQPRGRRQPIPKVRRPEGRTWAQPGYPWPLYGNEGCGWAGWLLSPRGSRPSWGPTDPRRRSRNLGKVIDTLTCGFADLMGYIPLVGAPLGGAARALAHGVRVLEDGVNYATGNLPGCSFSIFLLALLSCLTVPASAYQVRNSTGLYHVTNDCPNSSIVYEAHDAILHTPGCVPCVREGNVSRCWVAMTPTVATRDGKLPATQLRRHIDLLVGSATLCSALYVGDLCGSVFLIGQLFTFSPRRHWTTQGCNCSIYPGHITGHRMAWDMMMNWSPTAALVMAQLLRIPQAILDMIAGAHWGVLAGIAYFSMVGNWAKVLVVLLLFAGVDAETIVSGGQAARAMSGLVSLFTPGAKQNIQLINTNGSWHINSTALNCNESLNTGWLAGLIYQHKFNSSGCPERLASCRRLTDFDQGWGPISHANGSGPDQRPYCWHYPPKPCGIVPAKSVCGPVYCFTPSPVVVGTTDRSGAPTYNWGANDTDVFVLNNTRPPLGNWFGCTWMNSTGFTKVCGAPPCVIGGGGNNTLHCPTDCFRKHPEATYSRCGSGPWITPRCLVDYPYRLWHYPCTINYTIFKVRMYVGGVEHRLDAACNWTRGERCDLEDRDRSELSPLLLSTTQWQVLPCSFTTLPALSTGLIHLHQNIVDVQYLYGVGSSIASWAIKWEYVVLLFLLLADARVCSCLWMMLLISQAEAALENLVILNAASLAGTRGLVSFLVFFCFAWYLKGRWVPGAAYALYGMWPLLLLLLALPQRAYALDTEVAASCGGVVLVGLMALTLSPYYKRCISWCLWWLQYFLTRVEAQLHVWVPPLNVRGGRDAVILLMCVVHPTLVFDITKLLLAVLGPLWILQASLLKVPYFVRVQGLLRICALARKMVGGHYVQMAIIKLGALTGTYVYNHLTPLRDWAHNGLRDLAVAVEPVVFSQMETKLITWGADTAACGDIINGLPVSARKGREILLGPADGMVSKGWRLLAPITAYAQQTRGLLGCIITSLTGRDKNQVEGEVQIVSTAAQTFLATCINGVCWTVYHGAGTRTIASPKGPVIQMYTNVDQDLVGWPAPQGARSLTPCTCGSSDLYLVTRHADVIPVRRRGDSRGSLLSPRPISYLKGSSGGPLLCPAGHVVGIFRAAVCTRGVAKAVDFIPVESLETTMRSPVFTDNSSPPAVPQSFQVAHLHAPTGSGKSTKVPAAYAAQGYKVLVLNPSVAATLGFGAYMSKAHGIDPNIRTGVRTITTGSPITYSTYGKFLADGGCSGGAYDIIICDECHSTDATSVLGIGTVLDQAETAGARLVVLATATPPGSITVPHANIEEVALSTTGEIPFYGKAIPLEAIKGGRHLIFCHSKKKCDELAAKLVALGVNAVAYYRGLDVSVIPTSGDVVVVATDALMTGYTGDFDSVIDCNTCVTQTVDFSLDPTFTIETTTLPQDAVSRTQRRGRTGRGKPGIYRFVAPGERPSGMFDSSILCECYDTGCAWYELTPAETTVRLRAYMNTPGLPVCQDHLEFWEGVFTGLTHIDAHFLSQTKQGGENFPYLVAYQATVCARAQAPPPSWDQMWKCLIRLKPTLHGPTPLLYRLGAVQGEVTLTHPVTKYIMTCMSADLEVVTSTWVLVGGVLAALAAYCLSTGCVVIVGRIVLSGRPAIIPDREVLYREFDEMEECSQHLPYIEQGMMLAEQFKQKALGLLQTASRQAEVIAPTVQTNWQKLEAFWAKHMWNFISGIQYLAGLSTLPGNPAIASLMAFTAAVTSPLTTSQTLLFNILGGWVAAQLAAPGAATAFVGSGLAGAAVGSVGLGRVLVDILAGYGAGVAGALVAFKIMSGELPSTEDLVNLLPAILSPGALVVGVVCAAILRRHVGPGEGAVQWMNRLIAFASRGNHVSPTHYVPESDAAARVTAILSSLTVTQLLRRLHQWLSSESTTPCSGSWLRDIWDWICEVLSDFKTWLKTKLMPHLPGIPFVSCQHGYKGVWRGDGIMHTRCHCGAEITGHVKNGTMRIVGPKTCRNMWSGTFPINAYTTGPCTPLPAPNYTFALWRVSAEEYVEIRRVGDFHYVTGMTTDNLKCPCQVPSPEFFTELDGVRLHRFAPPCKPLLREEVSFRVGLHDYPVGSQLPCEPEPDVAVLTSMLTDPSHITAAAAGRRLARGSPPSEASSSASQLSAPSLKATCTINHDSPDAELIEANLLWRQEMGGNITRVESENKVVILDSFDPLVAEEDEREISVPAEILRKSRRFTQALPIWARPDYNPPLIETWKKPNYEPPVVHGCPLPPPQSPPVPPPRKKRTVVLTESTLSTALAELAAKSFGSSSTSGITGDNTTTSSEPAPSGCSPDSDAESYSSMPPLEGEPGDPDLSDGSWSTVSSEAGTEDVVCCSMSYTWTGALITPCAAEEQKLPINALSNSLLRHHNLVYSTTSRSACQRQKKVTFDRLQVLDSHYQDVLKEVKAAASKVKANLLSVEEACSLTPPHSAKSKFGYGAKDVRCHARKAVNHINSVWKDLLEDSVTPIQTTIMAKNEVFCVQPEKGGRKPARLIVFPDLGVRVCEKMALYDVVSKLPPAVMGSSYGFQYSPGQRVEFLVQAWKSKRTPMGFSYDTRCFDSTVTESDIRTEEAIYQCCDLDPQARVAIRSLTERLYVGGPLTNSRGENCGYRRCRASGVLTTSCGNTLTCYIKARAACRAAGLQDCTMLVCGDDLVVICESAGVQEDAASLRAFTEAMTRYSAPPGDPPQPEYDLELITSCSSNVSVAHDGTGKRVYYLTRDPTTPLARAAWETARHTPVNSWLGNIIMFAPTLWARMILMTHFFSVLIARDQLEQALDCEIYGACYSIEPLDLPPIIQRLHGLSAFSLHSYSPGEINRVAACLRKLGVPPLRAWRHRARSVRARLLSRGGRAAICGKYLFNWAVRTKLKLTPIAAAGRLDLSGWFTAGYSGGDIYHSVSHARPRWFWFCLLLLAAGVGIYLLPNR.

N-acetylserine; by host is present on serine 2. The segment at 2–23 (STIPKPQRKTKRNTNRRPQDVK) is interaction with STAT1. The tract at residues 2-58 (STIPKPQRKTKRNTNRRPQDVKFPGGGQIVGGVYLLPRRGPRLGVRATRKTSERSQP) is interaction with EIF2AK2/PKR. The segment at 2–59 (STIPKPQRKTKRNTNRRPQDVKFPGGGQIVGGVYLLPRRGPRLGVRATRKTSERSQPR) is interaction with DDX3X. Residues 2–75 (STIPKPQRKT…PKVRRPEGRT (74 aa)) are disordered. Over 2–168 (STIPKPQRKT…EDGVNYATGN (167 aa)) the chain is Cytoplasmic. 2 consecutive short sequence motifs (nuclear localization signal) follow at residues 5–13 (PKPQRKTKR) and 38–43 (PRRGPR). Residues 7 to 16 (PQRKTKRNTN) show a composition bias toward basic residues. Residues 32–47 (GGVYLLPRRGPRLGVR) show a composition bias toward low complexity. Serine 53 carries the post-translational modification Phosphoserine; by host. 2 consecutive short sequence motifs (nuclear localization signal) follow at residues 58-64 (PRGRRQP) and 66-71 (PKVRRP). The span at 58–68 (PRGRRQPIPKV) shows a compositional bias: basic residues. Residue serine 99 is modified to Phosphoserine; by host. An important for endoplasmic reticulum and mitochondrial localization region spans residues 112 to 152 (PRRRSRNLGKVIDTLTCGFADLMGYIPLVGAPLGGAARALA). Position 116 is a phosphoserine; by host PKA (serine 116). Positions 122 to 173 (VIDTLTCGFADLMGYIPLVGAPLGGAARALAHGVRVLEDGVNYATGNLPGCS) are interaction with APOA2. Residues 164–167 (YATG) are important for lipid droplets localization. Residues 169-189 (LPGCSFSIFLLALLSCLTVPA) form a helical membrane-spanning segment. Positions 178 to 191 (LLALLSCLTVPASA) are cleaved as a propeptide — ER anchor for the core protein, removed in mature form by host signal peptidase. Topologically, residues 190–358 (SAYQVRNSTG…AGAHWGVLAG (169 aa)) are lumenal. 3 N-linked (GlcNAc...) asparagine; by host glycosylation sites follow: asparagine 196, asparagine 209, and asparagine 234. An important for fusion region spans residues 265-296 (LVGSATLCSALYVGDLCGSVFLIGQLFTFSPR). Asparagine 305 carries N-linked (GlcNAc...) asparagine; by host glycosylation. A helical transmembrane segment spans residues 359-379 (IAYFSMVGNWAKVLVVLLLFA). Over 380–725 (GVDAETIVSG…WEYVVLLFLL (346 aa)) the chain is Lumenal. The HVR1 stretch occupies residues 385–411 (TIVSGGQAARAMSGLVSLFTPGAKQNI). N-linked (GlcNAc...) (high mannose) asparagine; by host glycosylation is found at asparagine 417, asparagine 423, asparagine 430, and asparagine 448. 4 disulfides stabilise this stretch: cysteine 429-cysteine 552, cysteine 452-cysteine 459, cysteine 486-cysteine 494, and cysteine 503-cysteine 508. The HVR2 stretch occupies residues 474-479 (HANGSG). The segment at 480-493 (PDQRPYCWHYPPKP) is CD81-binding 1. An N-linked (GlcNAc...) (high mannose) asparagine; by host glycan is attached at asparagine 532. N-linked (GlcNAc...) asparagine; by host glycosylation is present at asparagine 540. Positions 544–551 (PPLGNWFG) are CD81-binding 2. An N-linked (GlcNAc...) (high mannose) asparagine; by host glycan is attached at asparagine 556. A disulfide bond links cysteine 564 and cysteine 569. N-linked (GlcNAc...) (high mannose) asparagine; by host glycosylation occurs at asparagine 576. 3 disulfide bridges follow: cysteine 581–cysteine 585, cysteine 597–cysteine 620, and cysteine 607–cysteine 644. Asparagine 623 and asparagine 645 each carry an N-linked (GlcNAc...) (high mannose) asparagine; by host glycan. Cysteine 652 and cysteine 677 form a disulfide bridge. Residues 660 to 671 (SELSPLLLSTTQ) form a PKR/eIF2-alpha phosphorylation homology domain (PePHD) region. A helical transmembrane segment spans residues 726-746 (LADARVCSCLWMMLLISQAEA). Residues 747-757 (ALENLVILNAA) are Lumenal-facing. Residues 758–778 (SLAGTRGLVSFLVFFCFAWYL) traverse the membrane as a helical segment. Over 779–781 (KGR) the chain is Cytoplasmic. A helical transmembrane segment spans residues 782 to 803 (WVPGAAYALYGMWPLLLLLLAL). Residues 804-813 (PQRAYALDTE) are Lumenal-facing. Residues 814 to 834 (VAASCGGVVLVGLMALTLSPY) traverse the membrane as a helical segment. Residues 835 to 838 (YKRC) lie on the Cytoplasmic side of the membrane. The helical transmembrane segment at 839–859 (ISWCLWWLQYFLTRVEAQLHV) threads the bilayer. At 860–881 (WVPPLNVRGGRDAVILLMCVVH) the chain is on the lumenal side. The helical transmembrane segment at 882 to 902 (PTLVFDITKLLLAVLGPLWIL) threads the bilayer. One can recognise a Peptidase C18 domain in the interval 903-1026 (QASLLKVPYF…GMVSKGWRLL (124 aa)). The Cytoplasmic portion of the chain corresponds to 903–1657 (QASLLKVPYF…CMSADLEVVT (755 aa)). Residues 904–1206 (ASLLKVPYFV…PVESLETTMR (303 aa)) form a protease NS2-3 region. A lipid anchor (S-palmitoyl cysteine; by host) is attached at cysteine 922. The tract at residues 929–949 (VGGHYVQMAIIKLGALTGTYV) is interaction with host SCPS1. Residues histidine 952, glutamate 972, and cysteine 993 each act as for protease NS2 activity; shared with dimeric partner in the active site. A Peptidase S29 domain is found at 1027–1208 (APITAYAQQT…ESLETTMRSP (182 aa)). Residues histidine 1083 and aspartate 1107 each act as charge relay system; for serine protease NS3 activity in the active site. Zn(2+) is bound by residues cysteine 1123 and cysteine 1125. Residue serine 1165 is the Charge relay system; for serine protease NS3 activity of the active site. Residues cysteine 1171 and histidine 1175 each contribute to the Zn(2+) site. Residues 1217-1369 (PAVPQSFQVA…ANIEEVALST (153 aa)) enclose the Helicase ATP-binding domain. 1230–1237 (APTGSGKS) serves as a coordination point for ATP. Serine 1237 and glutamate 1317 together coordinate Mg(2+). The DECH box signature appears at 1316 to 1319 (DECH). Positions 1486–1497 (QRRGRTGRGKPG) are RNA-binding. A helical transmembrane segment spans residues 1658–1678 (STWVLVGGVLAALAAYCLSTG). The interval 1679 to 1690 (CVVIVGRIVLSG) is NS3-binding. Residues 1679-1805 (CVVIVGRIVL…AVTSPLTTSQ (127 aa)) are Cytoplasmic-facing. Residues 1806-1824 (TLLFNILGGWVAAQLAAPG) traverse the membrane as a helical segment. Residues 1825–1828 (AATA) are Lumenal-facing. Residues 1829–1849 (FVGSGLAGAAVGSVGLGRVLV) traverse the membrane as a helical segment. Aspartate 1850 is a topological domain (cytoplasmic). A helical transmembrane segment spans residues 1851–1871 (ILAGYGAGVAGALVAFKIMSG). Over 1872–1881 (ELPSTEDLVN) the chain is Lumenal. The chain crosses the membrane as a helical span at residues 1882–1902 (LLPAILSPGALVVGVVCAAIL). Residues 1903–1972 (RRHVGPGEGA…WLSSESTTPC (70 aa)) are Cytoplasmic-facing. The S-palmitoyl cysteine; by host moiety is linked to residue cysteine 1972. Residues 1973–2002 (SGSWLRDIWDWICEVLSDFKTWLKTKLMPH) lie within the membrane without spanning it. Residues 2003–2990 (LPGIPFVSCQ…YHSVSHARPR (988 aa)) lie on the Cytoplasmic side of the membrane. Zn(2+) contacts are provided by cysteine 2011, cysteine 2029, cysteine 2031, and cysteine 2052. The tract at residues 2120–2208 (EFFTELDGVR…ASSSASQLSA (89 aa)) is FKBP8-binding. A transcriptional activation region spans residues 2120-2332 (EFFTELDGVR…PVPPPRKKRT (213 aa)). The interval 2135-2139 (PPCKP) is interaction with non-structural protein 4A. A disordered region spans residues 2187-2207 (GRRLARGSPPSEASSSASQLS). The tract at residues 2189 to 2441 (RLARGSPPSE…TPCAAEEQKL (253 aa)) is interaction with host SKP2. Phosphoserine; by host; in p56 is present on serine 2194. Serine 2197, serine 2201, serine 2204, serine 2207, and serine 2210 each carry phosphoserine; by host; in p58. Positions 2210–2249 (SLKATCTINHDSPDAELIEANLLWRQEMGGNITRVESENK) are ISDR. The tract at residues 2210 to 2275 (SLKATCTINH…REISVPAEIL (66 aa)) is interaction with EIF2AK2/PKR. The tract at residues 2249 to 2306 (KVVILDSFDPLVAEEDEREISVPAEILRKSRRFTQALPIWARPDYNPPLIETWKKPNY) is NS4B-binding. A disordered region spans residues 2312 to 2334 (HGCPLPPPQSPPVPPPRKKRTVV). Over residues 2315-2326 (PLPPPQSPPVPP) the composition is skewed to pro residues. The short motif at 2322–2325 (PPVP) is the SH3-binding element. Residues 2326–2334 (PPRKKRTVV) carry the Nuclear localization signal motif. Lysine 2350 is covalently cross-linked (Glycyl lysine isopeptide (Lys-Gly) (interchain with G-Cter in ubiquitin)). The span at 2351–2369 (SFGSSSTSGITGDNTTTSS) shows a compositional bias: low complexity. The interval 2351 to 2408 (SFGSSSTSGITGDNTTTSSEPAPSGCSPDSDAESYSSMPPLEGEPGDPDLSDGSWSTV) is disordered. Residues 2354-2377 (SSSTSGITGDNTTTSSEPAPSGCS) are V3. Serine 2449 and serine 2462 each carry phosphoserine; by host. The RdRp catalytic domain occupies 2634–2752 (PMGFSYDTRC…ICESAGVQED (119 aa)). Residues aspartate 2640, aspartate 2738, and aspartate 2739 each coordinate Mg(2+). The chain crosses the membrane as a helical span at residues 2991–3011 (WFWFCLLLLAAGVGIYLLPNR).

This sequence belongs to the hepacivirus polyprotein family. Homooligomer. Interacts with E1 (via C-terminus). Interacts with the non-structural protein 5A. Interacts (via N-terminus) with host STAT1 (via SH2 domain); this interaction results in decreased STAT1 phosphorylation and ubiquitin-mediated proteasome-dependent STAT1 degradation, leading to decreased IFN-stimulated gene transcription. Interacts with host STAT3; this interaction constitutively activates STAT3. Interacts with host LTBR receptor. Interacts with host TNFRSF1A receptor and possibly induces apoptosis. Interacts with host HNRPK. Interacts with host YWHAE. Interacts with host UBE3A/E6AP. Interacts with host DDX3X. Interacts with host APOA2. Interacts with host RXRA protein. Interacts with host SP110 isoform 3/Sp110b; this interaction sequesters the transcriptional corepressor SP110 away from the nucleus. Interacts with host CREB3 nuclear transcription protein; this interaction triggers cell transformation. Interacts with host ACY3. Interacts with host C1QR1. Interacts with host RBM24; this interaction, which enhances the interaction of the mature core protein with 5'-UTR, may inhibit viral translation and favor replication. Interacts with host EIF2AK2/PKR; this interaction induces the autophosphorylation of EIF2AK2. Part of the viral assembly initiation complex composed of NS2, E1, E2, NS3, NS4A, NS5A and the mature core protein. As to quaternary structure, forms a heterodimer with envelope glycoprotein E2. Interacts with mature core protein. Interacts with protease NS2. The heterodimer E1/E2 interacts with host CLDN1; this interaction plays a role in viral entry into host cell. Interacts with host SPSB2 (via C-terminus). Part of the viral assembly initiation complex composed of NS2, E1, E2, NS3, NS4A, NS5A and the mature core protein. Interacts with host NEURL3; this interaction prevents E1 binding to glycoprotein E2. In terms of assembly, forms a heterodimer with envelope glycoprotein E1. Interacts with host CD81 and SCARB1 receptors; these interactions play a role in viral entry into host cell. Interacts with host EIF2AK2/PKR; this interaction inhibits EIF2AK2 and probably allows the virus to evade the innate immune response. Interacts with host CD209/DC-SIGN and CLEC4M/DC-SIGNR. Interact with host SPCS1; this interaction is essential for viral particle assembly. Interacts with protease NS2. The heterodimer E1/E2 interacts with host CLDN1; this interaction plays a role in viral entry into host cell. Part of the viral assembly initiation complex composed of NS2, E1, E2, NS3, NS4A, NS5A and the mature core protein. Interacts with host SLC3A2/4F2hc; the interaction may facilitate viral entry into host cell. Interacts with human PLSCR1. Homohexamer. Homoheptamer. Interacts with protease NS2. As to quaternary structure, homodimer. Interacts with host SPCS1; this interaction is essential for viral particle assembly. Interacts with envelope glycoprotein E1. Interacts with envelope glycoprotein E2. Interacts with viroporin p7. Interacts with serine protease/helicase NS3. Part of the replication complex composed of NS2, NS3, NS4A, NS4B, NS5A and the RNA-directed RNA polymerase embedded in an ER-derived membranous web. Part of the viral assembly initiation complex composed of NS2, E1, E2, NS3, NS4A, NS5A and the mature core protein. In terms of assembly, interacts with protease NS2. Interacts with non-structural protein 4A; this interaction stabilizes the folding of NS3 serine protease. NS3-NS4A interaction is essential for NS3 activation and allows membrane anchorage of the latter. NS3/NS4A complex also prevents phosphorylation of host IRF3, thus preventing the establishment of dsRNA induced antiviral state. Interacts with host MAVS; this interaction leads to the cleavage and inhibition of host MAVS. Interacts with host TICAM1; this interaction leads to the cleavage and inhibition of host TICAM1. Interacts with host TANK-binding kinase/TBK1; this interaction results in the inhibition of the association between TBK1 and IRF3, which leads to the inhibition of IRF3 activation. Interacts with host RBM24. Part of the replication complex composed of NS2, NS3, NS4A, NS4B, NS5A and the RNA-directed RNA polymerase embedded in an ER-derived membranous web. Part of the viral assembly initiation complex composed of NS2, E1, E2, NS3, NS4A, NS5A and the mature core protein. Interacts with NS3 serine protease; this interaction stabilizes the folding of NS3 serine protease. NS3-NS4A interaction is essential for NS3 activation and allows membrane anchorage of the latter. Interacts with non-structural protein 5A (via N-terminus). Part of the replication complex composed of NS2, NS3, NS4A, NS4B, NS5A and the RNA-directed RNA polymerase embedded in an ER-derived membranous web. Part of the viral assembly initiation complex composed of NS2, E1, E2, NS3, NS4A, NS5A and the mature core protein. As to quaternary structure, homomultimer. Interacts with non-structural protein NS5A. Interacts with host PLA2G4C; this interaction likely initiates the recruitment of replication complexes to lipid droplets. Interacts with host STING; this interaction disrupts the interaction between STING and TBK1 thereby suppressing the interferon signaling. Part of the replication complex composed of NS2, NS3, NS4A, NS4B, NS5A and the RNA-directed RNA polymerase embedded in an ER-derived membranous web. In terms of assembly, monomer. Homodimer; dimerization is required for RNA-binding. Interacts with the mature core protein. Interacts (via N-terminus) with non-structural protein 4A. Interacts with non-structural protein 4B. Interacts (via region D2) with RNA-directed RNA polymerase. Part of the viral assembly initiation complex composed of NS2, E1, E2, NS3, NS4A, NS5A and the mature core protein. Part of the replication complex composed of NS2, NS3, NS4A, NS4B, NS5A and the RNA-directed RNA polymerase embedded in an ER-derived membranous web. Interacts with host GRB2. Interacts with host BIN1. Interacts with host PIK3R1. Interacts with host SRCAP. Interacts with host FKBP8. Interacts (via C-terminus) with host VAPB (via MSP domain). Interacts with host EIF2AK2/PKR; this interaction leads to disruption of EIF2AK2 dimerization by NS5A and probably allows the virus to evade the innate immune response. Interacts (via N-terminus) with host PACSIN2 (via N-terminus); this interaction attenuates protein kinase C alpha-mediated phosphorylation of PACSIN2 by disrupting the interaction between PACSIN2 and PRKCA. Interacts (via N-terminus) with host SRC kinase (via SH2 domain). Interacts with most Src-family kinases. Interacts with host IFI27 and SKP2; promotes the ubiquitin-mediated proteasomal degradation of NS5A. Interacts with host GPS2. Interacts with host TNFRSF21; this interaction allows the modulation by the virus of JNK, p38 MAPK, STAT3, and Akt signaling pathways in a DR6-dependent manner. Interacts (via N-terminus) with host CIDEB (via N-terminus); this interaction seems to regulate the association of HCV particles with APOE. Interacts with host CHKA/Choline Kinase-alpha; CHKA bridges host PI4KA and NS5A and potentiates NS5A-stimulated PI4KA activity, which then facilitates the targeting of the ternary complex to the ER for viral replication. Interacts with host SPSB2 (via C-terminus); this interaction targets NS5A for ubiquitination and degradation. Interacts with host RAB18; this interaction may promote the association of NS5A and other replicase components with lipid droplets. Interacts (via region D2) with host PPIA/CYPA; the interaction stimulates RNA-binding ability of NS5A and is dependent on the peptidyl-prolyl cis-trans isomerase activity of PPIA/CYPA. Interacts with host TRIM14; this interaction induces the degradation of NS5A. Homooligomer. Interacts with non-structural protein 5A. Interacts with host VAPB. Interacts with host PRK2/PKN2. Interacts with host HNRNPA1 and SEPT6; these interactions facilitate viral replication. Part of the replication complex composed of NS2, NS3, NS4A, NS4B, NS5A and the RNA-directed RNA polymerase. It depends on Zn(2+) as a cofactor. Mg(2+) serves as cofactor. Post-translationally, specific enzymatic cleavages in vivo yield mature proteins. The structural proteins, core, E1, E2 and p7 are produced by proteolytic processing by host signal peptidases. The core protein precursor is synthesized as a 23 kDa, which is retained in the ER membrane through the hydrophobic signal peptide. Cleavage by the signal peptidase releases the 21 kDa mature core protein. The cleavage of the core protein precursor occurs between aminoacids 176 and 188 but the exact cleavage site is not known. Some degraded forms of the core protein appear as well during the course of infection. The other proteins (p7, NS2, NS3, NS4A, NS4B, NS5A and NS5B) are cleaved by the viral proteases. Autoprocessing between NS2 and NS3 is mediated by the NS2 cysteine protease catalytic domain and regulated by the NS3 N-terminal domain. Phosphorylated by host PKC and PKA. In terms of processing, ubiquitinated; mediated by UBE3A and leading to core protein subsequent proteasomal degradation. Post-translationally, highly N-glycosylated. Palmitoylation is required for NS2/3 autoprocessing and E2 recruitment to membranes. In terms of processing, palmitoylated. This modification may play a role in its polymerization or in protein-protein interactions. Post-translationally, phosphorylated on serines in a basal form termed p56. p58 is a hyperphosphorylated form of p56. p56 and p58 coexist in the cell in roughly equivalent amounts. Hyperphosphorylation is dependent on the presence of NS4A. Host CSNK1A1/CKI-alpha or RPS6KB1 kinases may be responsible for NS5A phosphorylation. Tyrosine phosphorylation is essential for the interaction with host SRC. In terms of processing, the N-terminus is phosphorylated by host PRK2/PKN2.

The protein localises to the host endoplasmic reticulum membrane. It is found in the host mitochondrion membrane. Its subcellular location is the virion. The protein resides in the host cytoplasm. It localises to the host nucleus. The protein localises to the host lipid droplet. It is found in the virion membrane. Its subcellular location is the host mitochondrion. The protein resides in the host cell membrane. It localises to the host perinuclear region. It catalyses the reaction Hydrolysis of four peptide bonds in the viral precursor polyprotein, commonly with Asp or Glu in the P6 position, Cys or Thr in P1 and Ser or Ala in P1'.. The enzyme catalyses a ribonucleoside 5'-triphosphate + H2O = a ribonucleoside 5'-diphosphate + phosphate + H(+). It carries out the reaction ATP + H2O = ADP + phosphate + H(+). The catalysed reaction is RNA(n) + a ribonucleoside 5'-triphosphate = RNA(n+1) + diphosphate. With respect to regulation, inhibited by the antiviral drug hexamethylene amiloride. Inhibition by amantadine appears to be genotype-dependent. Also inhibited by long-alkyl-chain iminosugar derivatives. Its activity is regulated as follows. Activity is up-regulated by PRK2/PKN2-mediated phosphorylation. In terms of biological role, packages viral RNA to form a viral nucleocapsid, and promotes virion budding. Participates in the viral particle production as a result of its interaction with the non-structural protein 5A. Binds RNA and may function as a RNA chaperone to induce the RNA structural rearrangements taking place during virus replication. Modulates viral translation initiation by interacting with viral IRES and 40S ribosomal subunit. Affects various cell signaling pathways, host immunity and lipid metabolism. Prevents the establishment of cellular antiviral state by blocking the interferon-alpha/beta (IFN-alpha/beta) and IFN-gamma signaling pathways and by blocking the formation of phosphorylated STAT1 and promoting ubiquitin-mediated proteasome-dependent degradation of STAT1. Activates STAT3 leading to cellular transformation. Regulates the activity of cellular genes, including c-myc and c-fos. May repress the promoter of p53, and sequester CREB3 and SP110 isoform 3/Sp110b in the cytoplasm. Represses cell cycle negative regulating factor CDKN1A, thereby interrupting an important check point of normal cell cycle regulation. Targets transcription factors involved in the regulation of inflammatory responses and in the immune response: suppresses TNF-induced NF-kappa-B activation, and activates AP-1. Binds to dendritic cells (DCs) via C1QR1, resulting in down-regulation of T-lymphocytes proliferation. Alters lipid metabolism by interacting with hepatocellular proteins involved in lipid accumulation and storage. Induces up-regulation of FAS promoter activity, and thereby contributes to the increased triglyceride accumulation in hepatocytes (steatosis). Forms a heterodimer with envelope glycoprotein E2, which mediates virus attachment to the host cell, virion internalization through clathrin-dependent endocytosis and fusion with host membrane. Fusion with the host cell is most likely mediated by both E1 and E2, through conformational rearrangements of the heterodimer required for fusion rather than a classical class II fusion mechanism. E1/E2 heterodimer binds host apolipoproteins such as APOB and ApoE thereby forming a lipo-viro-particle (LVP). APOE associated to the LVP allows the initial virus attachment to cell surface receptors such as the heparan sulfate proteoglycans (HSPGs), syndecan-1 (SDC1), syndecan-1 (SDC2), the low-density lipoprotein receptor (LDLR) and scavenger receptor class B type I (SCARB1). The cholesterol transfer activity of SCARB1 allows E2 exposure and binding of E2 to SCARB1 and the tetraspanin CD81. E1/E2 heterodimer binding on CD81 activates the epithelial growth factor receptor (EGFR) signaling pathway. Diffusion of the complex E1-E2-EGFR-SCARB1-CD81 to the cell lateral membrane allows further interaction with Claudin 1 (CLDN1) and occludin (OCLN) to finally trigger HCV entry. Functionally, forms a heterodimer with envelope glycoprotein E1, which mediates virus attachment to the host cell, virion internalization through clathrin-dependent endocytosis and fusion with host membrane. Fusion with the host cell is most likely mediated by both E1 and E2, through conformational rearrangements of the heterodimer required for fusion rather than a classical class II fusion mechanism. The interaction between envelope glycoprotein E2 and host apolipoprotein E/APOE allows the proper assembly, maturation and infectivity of the viral particles. This interaction is probably promoted via the up-regulation of cellular autophagy by the virus. E1/E2 heterodimer binds host apolipoproteins such as APOB and APOE thereby forming a lipo-viro-particle (LVP). APOE associated to the LVP allows the initial virus attachment to cell surface receptors such as the heparan sulfate proteoglycans (HSPGs), syndecan-1 (SDC1), syndecan-1 (SDC2), the low-density lipoprotein receptor (LDLR) and scavenger receptor class B type I (SCARB1). The cholesterol transfer activity of SCARB1 allows E2 exposure and binding of E2 to SCARB1 and the tetraspanin CD81. E1/E2 heterodimer binding on CD81 activates the epithelial growth factor receptor (EGFR) signaling pathway. Diffusion of the complex E1-E2-EGFR-SCARB1-CD81 to the cell lateral membrane allows further interaction with Claudin 1 (CLDN1) and occludin (OCLN) to finally trigger HCV entry. Inhibits host EIF2AK2/PKR activation, preventing the establishment of an antiviral state. Viral ligand for CD209/DC-SIGN and CLEC4M/DC-SIGNR, which are respectively found on dendritic cells (DCs), and on liver sinusoidal endothelial cells and macrophage-like cells of lymph node sinuses. These interactions allow the capture of circulating HCV particles by these cells and subsequent facilitated transmission to permissive cells such as hepatocytes and lymphocyte subpopulations. The interaction between E2 and host amino acid transporter complex formed by SLC3A2 and SLC7A5/LAT1 may facilitate viral entry into host cell. Its function is as follows. Ion channel protein that acts as a viroporin and plays an essential role in the assembly, envelopment and secretion of viral particles. Regulates the host cell secretory pathway, which induces the intracellular retention of viral glycoproteins and favors assembly of viral particles. Creates a pore in acidic organelles and releases Ca(2+) and H(+) in the cytoplasm of infected cells, leading to a productive viral infection. High levels of cytoplasmic Ca(2+) may trigger membrane trafficking and transport of viral ER-associated proteins to viroplasms, sites of viral genome replication. This ionic imbalance induces the assembly of the inflammasome complex, which triggers the maturation of pro-IL-1beta into IL-1beta through the action of caspase-1. Targets also host mitochondria and induces mitochondrial depolarization. In addition of its role as a viroporin, acts as a lipid raft adhesion factor. In terms of biological role, cysteine protease required for the proteolytic auto-cleavage between the non-structural proteins NS2 and NS3. The N-terminus of NS3 is required for the function of NS2 protease (active region NS2-3). Promotes the initiation of viral particle assembly by mediating the interaction between structural and non-structural proteins. Displays three enzymatic activities: serine protease with a chymotrypsin-like fold, NTPase and RNA helicase. NS3 serine protease, in association with NS4A, is responsible for the cleavages of NS3-NS4A, NS4A-NS4B, NS4B-NS5A and NS5A-NS5B. The NS3/NS4A complex prevents phosphorylation of host IRF3, thus preventing the establishment of dsRNA induced antiviral state. The NS3/NS4A complex induces host amino acid transporter component SLC3A2, thus contributing to HCV propagation. NS3 RNA helicase binds to RNA and unwinds both dsDNA and dsRNA in the 3' to 5' direction, and likely resolves RNA complicated stable secondary structures in the template strand. Binds a single ATP and catalyzes the unzipping of a single base pair of dsRNA. Inhibits host antiviral proteins TBK1 and IRF3 thereby preventing the establishment of an antiviral state. Cleaves host MAVS/CARDIF thereby preventing the establishment of an antiviral state. Cleaves host TICAM1/TRIF, thereby disrupting TLR3 signaling and preventing the establishment of an antiviral state. Functionally, induces a specific membrane alteration that serves as a scaffold for the virus replication complex. This membrane alteration gives rise to the so-called ER-derived membranous web that contains the replication complex. NS4B self-interaction contributes to its function in membranous web formation. Promotes host TRIF protein degradation in a CASP8-dependent manner thereby inhibiting host TLR3-mediated interferon signaling. Disrupts the interaction between STING and TBK1 contributing to the inhibition of interferon signaling. Its function is as follows. Phosphorylated protein that is indispensable for viral replication and assembly. Both hypo- and hyperphosphorylated states are required for the viral life cycle. The hyperphosphorylated form of NS5A is an inhibitor of viral replication. Involved in RNA-binding and especially in binding to the viral genome. Zinc is essential for RNA-binding. Participates in the viral particle production as a result of its interaction with the mature viral core protein. Its interaction with host VAPB may target the viral replication complex to vesicles. Down-regulates viral IRES translation initiation. Mediates interferon resistance, presumably by interacting with and inhibiting host EIF2AK2/PKR. Prevents BIN1-induced apoptosis. Acts as a transcriptional activator of some host genes important for viral replication when localized in the nucleus. Via the interaction with host PACSIN2, modulates lipid droplet formation in order to promote virion assembly. Modulates TNFRSF21/DR6 signaling pathway for viral propagation. In terms of biological role, RNA-dependent RNA polymerase that performs primer-template recognition and RNA synthesis during viral replication. Initiates RNA transcription/replication at a flavin adenine dinucleotide (FAD), resulting in a 5'- FAD cap on viral RNAs. In this way, recognition of viral 5' RNA by host pattern recognition receptors can be bypassed, thereby evading activation of antiviral pathways. This is Genome polyprotein from Hepatitis C virus genotype 1b (isolate HC-J1) (HCV).